The sequence spans 473 residues: MKILYSLRRYFHVETLFNGTLALGGRDQESTGFAWWAGNARLINLSGKLLGAHVAHAGLIVFWAGAMNLFEVAHFVPEKPMYEQGLILLPHLATLGWGIGPGGEVINTFPYFVSGVLHLISSAVLGFGGVYHALIGPETLEESFPFFGYVWKDKNKMTTILGIHLILLGAGALLLVAKAIWFGGLYDTWAPGGGDVRKITNITLNPSTIFGYLLKSPFGGEGWIVSVDNMEDIVGGHVWLGIICIFGGIWHILTKPFAWARRAFVWSGEAYLSYSLAAISLMGFIACCFVWFNNTAYPSEFYGPTGPEASQAQAFSFLVRDQRLGANVGSAQGPTGLGKYLMRSPTGEIIFGGETMRFWDLRAPWLEPLRGPNGLDLSKLKKDIQPWQERRSAEYMTHAPLGSLNSVGGVATEINAVNYVSPRSWLSTSHFVLGFFFFVGHLWHAGRARAAAAGFEKGIDRDSEPVLYMEPLN.

The propeptide occupies M1 to E14. T15 bears the N-acetylthreonine mark. The residue at position 15 (T15) is a Phosphothreonine. Transmembrane regions (helical) follow at residues L69–A93, L134–N155, K178–T200, K255–S275, and W291–A312. E367 serves as a coordination point for [CaMn4O5] cluster. Residues R447–P471 form a helical membrane-spanning segment.

This sequence belongs to the PsbB/PsbC family. PsbC subfamily. As to quaternary structure, PSII is composed of 1 copy each of membrane proteins PsbA, PsbB, PsbC, PsbD, PsbE, PsbF, PsbH, PsbI, PsbJ, PsbK, PsbL, PsbM, PsbT, PsbX, PsbY, PsbZ, Psb30/Ycf12, at least 3 peripheral proteins of the oxygen-evolving complex and a large number of cofactors. It forms dimeric complexes. Requires Binds multiple chlorophylls and provides some of the ligands for the Ca-4Mn-5O cluster of the oxygen-evolving complex. It may also provide a ligand for a Cl- that is required for oxygen evolution. PSII binds additional chlorophylls, carotenoids and specific lipids. as cofactor.

It localises to the plastid. The protein localises to the chloroplast thylakoid membrane. Its function is as follows. One of the components of the core complex of photosystem II (PSII). It binds chlorophyll and helps catalyze the primary light-induced photochemical processes of PSII. PSII is a light-driven water:plastoquinone oxidoreductase, using light energy to abstract electrons from H(2)O, generating O(2) and a proton gradient subsequently used for ATP formation. The chain is Photosystem II CP43 reaction center protein from Chara vulgaris (Common stonewort).